The following is a 245-amino-acid chain: Orotidine 5'-phosphate decarboxylase (245 aa).

Substrate-binding positions include Asp-22, Lys-44, 71–80, Thr-131, Arg-192, Gln-201, Gly-221, and Arg-222; that span reads DLKFHDIPNT. The Proton donor role is filled by Lys-73.

Belongs to the OMP decarboxylase family. Type 1 subfamily. In terms of assembly, homodimer.

It carries out the reaction orotidine 5'-phosphate + H(+) = UMP + CO2. Its pathway is pyrimidine metabolism; UMP biosynthesis via de novo pathway; UMP from orotate: step 2/2. Catalyzes the decarboxylation of orotidine 5'-monophosphate (OMP) to uridine 5'-monophosphate (UMP). The protein is Orotidine 5'-phosphate decarboxylase of Escherichia coli O81 (strain ED1a).